Consider the following 212-residue polypeptide: Molybdenum cofactor guanylyltransferase (212 aa).

Residues 14 to 16 (LAG), Lys27, Asn55, Asp73, and Asp108 contribute to the GTP site. Asp108 contacts Mg(2+).

This sequence belongs to the MobA family. Monomer. Mg(2+) serves as cofactor.

The protein localises to the cytoplasm. It carries out the reaction Mo-molybdopterin + GTP + H(+) = Mo-molybdopterin guanine dinucleotide + diphosphate. In terms of biological role, transfers a GMP moiety from GTP to Mo-molybdopterin (Mo-MPT) cofactor (Moco or molybdenum cofactor) to form Mo-molybdopterin guanine dinucleotide (Mo-MGD) cofactor. This is Molybdenum cofactor guanylyltransferase from Bradyrhizobium sp. (strain ORS 278).